The following is a 347-amino-acid chain: 5-deoxyribose 1-phosphate isomerase (347 aa).

Substrate is bound by residues 48-50, arginine 91, and glutamine 198; that span reads RGA. The active-site Proton donor is aspartate 239. Position 249–250 (249–250) interacts with substrate; the sequence is NK.

Belongs to the EIF-2B alpha/beta/delta subunits family. DrdI subfamily.

The enzyme catalyses 5-deoxy-alpha-D-ribose 1-phosphate = 5-deoxy-D-ribulose 1-phosphate. Its pathway is carbohydrate degradation. In terms of biological role, catalyzes the isomerization of 5-deoxy-alpha-D-ribose 1-phosphate to 5-deoxy-D-ribulose 1-phosphate, as part of a 5-deoxyribose salvage pathway that recycles this toxic radical SAM enzyme by-product to mainstream metabolites. The protein is 5-deoxyribose 1-phosphate isomerase of Bacillus thuringiensis (strain Al Hakam).